Here is a 174-residue protein sequence, read N- to C-terminus: MNYFDLFNVVPAFDIDTALLAERYRELQRAVHPDKFANDTEQQKLLSVQRTAQVNDGYQTLKNPLRRAEHMLSLRGIELSHETTTLKDGAFLMQQMEWREALEDIQHNSDPQSSIDELYESFGEFESTLLTKLATLLISDESADALLAADQIRKLKFMAKLHDELARIEDGLLD.

The 73-residue stretch at 2-74 folds into the J domain; it reads NYFDLFNVVP…LRRAEHMLSL (73 aa).

This sequence belongs to the HscB family. As to quaternary structure, interacts with HscA and stimulates its ATPase activity.

In terms of biological role, co-chaperone involved in the maturation of iron-sulfur cluster-containing proteins. Seems to help targeting proteins to be folded toward HscA. This is Co-chaperone protein HscB homolog from Shewanella frigidimarina (strain NCIMB 400).